A 106-amino-acid chain; its full sequence is Small ribosomal subunit protein mS33 (106 aa).

The residue at position 2 (S2) is an N-acetylserine. Over residues 85–94 the composition is skewed to basic residues; sequence LKKLRGKVKP. The disordered stretch occupies residues 85–106; the sequence is LKKLRGKVKPRKGEGKRAAKKK. The segment covering 95-106 has biased composition (basic and acidic residues); that stretch reads RKGEGKRAAKKK.

It belongs to the mitochondrion-specific ribosomal protein mS33 family. As to quaternary structure, component of the mitochondrial ribosome small subunit (28S) which comprises a 12S rRNA and about 30 distinct proteins.

The protein resides in the mitochondrion. This is Small ribosomal subunit protein mS33 from Bos taurus (Bovine).